Consider the following 112-residue polypeptide: UPF0060 membrane protein AAur_4166 (112 aa).

The next 4 membrane-spanning stretches (helical) occupy residues 8-28, 33-53, 62-82, and 91-111; these read ILFV…WQAV, AWWW…FAAF, VLAA…MLMD, and VIGA…PRPG.

The protein belongs to the UPF0060 family.

The protein localises to the cell membrane. This Paenarthrobacter aurescens (strain TC1) protein is UPF0060 membrane protein AAur_4166.